Consider the following 274-residue polypeptide: NH(3)-dependent NAD(+) synthetase (274 aa).

46–53 contacts ATP; the sequence is GISGGQDS. Aspartate 52 is a Mg(2+) binding site. Arginine 140 serves as a coordination point for deamido-NAD(+). Threonine 160 contacts ATP. Glutamate 165 is a Mg(2+) binding site. The deamido-NAD(+) site is built by lysine 173 and aspartate 180. Lysine 189 and threonine 211 together coordinate ATP. 260 to 261 is a deamido-NAD(+) binding site; that stretch reads HK.

It belongs to the NAD synthetase family. As to quaternary structure, homodimer.

It carries out the reaction deamido-NAD(+) + NH4(+) + ATP = AMP + diphosphate + NAD(+) + H(+). The protein operates within cofactor biosynthesis; NAD(+) biosynthesis; NAD(+) from deamido-NAD(+) (ammonia route): step 1/1. In terms of biological role, catalyzes the ATP-dependent amidation of deamido-NAD to form NAD. Uses ammonia as a nitrogen source. In Listeria monocytogenes serovar 1/2a (strain ATCC BAA-679 / EGD-e), this protein is NH(3)-dependent NAD(+) synthetase.